Reading from the N-terminus, the 636-residue chain is 1-deoxy-D-xylulose-5-phosphate synthase (636 aa).

Thiamine diphosphate contacts are provided by residues His74 and 115-117; that span reads GHA. Asp146 contributes to the Mg(2+) binding site. Thiamine diphosphate contacts are provided by residues 147–148, Asn175, Tyr285, and Glu368; that span reads GA. Asn175 provides a ligand contact to Mg(2+).

This sequence belongs to the transketolase family. DXPS subfamily. As to quaternary structure, homodimer. It depends on Mg(2+) as a cofactor. The cofactor is thiamine diphosphate.

The enzyme catalyses D-glyceraldehyde 3-phosphate + pyruvate + H(+) = 1-deoxy-D-xylulose 5-phosphate + CO2. The protein operates within metabolic intermediate biosynthesis; 1-deoxy-D-xylulose 5-phosphate biosynthesis; 1-deoxy-D-xylulose 5-phosphate from D-glyceraldehyde 3-phosphate and pyruvate: step 1/1. Its function is as follows. Catalyzes the acyloin condensation reaction between C atoms 2 and 3 of pyruvate and glyceraldehyde 3-phosphate to yield 1-deoxy-D-xylulose-5-phosphate (DXP). The chain is 1-deoxy-D-xylulose-5-phosphate synthase from Anaeromyxobacter dehalogenans (strain 2CP-C).